A 347-amino-acid chain; its full sequence is 4-hydroxyproline 2-epimerase (347 aa).

Glutamine 85 serves as a coordination point for substrate. Residue serine 93 is the Proton acceptor of the active site. Residues 94–95 (GS) and aspartate 251 contribute to the substrate site. Cysteine 255 (proton donor) is an active-site residue. Residue 256–257 (GT) coordinates substrate.

This sequence belongs to the proline racemase family.

It catalyses the reaction trans-4-hydroxy-L-proline = cis-4-hydroxy-D-proline. In terms of biological role, catalyzes the epimerization of trans-4-hydroxy-L-proline (t4LHyp) to cis-4-hydroxy-D-proline (c4DHyp). May be involved in a degradation pathway of t4LHyp. Can also catalyze the epimerization of trans-3-hydroxy-L-proline (t3LHyp) to cis-3-hydroxy-D-proline (c3DHyp) in vitro. Displays no proline racemase activity. The polypeptide is 4-hydroxyproline 2-epimerase (Allorhizobium ampelinum (strain ATCC BAA-846 / DSM 112012 / S4) (Agrobacterium vitis (strain S4))).